A 494-amino-acid polypeptide reads, in one-letter code: Cysteine--tRNA ligase (494 aa).

Cys29 contacts Zn(2+). The 'HIGH' region motif lies at 31-41 (VTVYDHCHIGH). Residues Cys209, His234, and Glu238 each coordinate Zn(2+). Positions 266 to 270 (KMSKS) match the 'KMSKS' region motif. Lys269 contributes to the ATP binding site.

It belongs to the class-I aminoacyl-tRNA synthetase family. In terms of assembly, monomer. Requires Zn(2+) as cofactor.

It localises to the cytoplasm. The catalysed reaction is tRNA(Cys) + L-cysteine + ATP = L-cysteinyl-tRNA(Cys) + AMP + diphosphate. The protein is Cysteine--tRNA ligase of Geotalea uraniireducens (strain Rf4) (Geobacter uraniireducens).